The primary structure comprises 209 residues: Large ribosomal subunit protein bL9 (209 aa).

The interval 169-209 (RDGASFTEDYDPNAEPGLATEAEEAVADADDNAETNSEESL) is disordered. Over residues 189-209 (EAEEAVADADDNAETNSEESL) the composition is skewed to acidic residues.

Belongs to the bacterial ribosomal protein bL9 family.

Functionally, binds to the 23S rRNA. In Zymomonas mobilis subsp. mobilis (strain ATCC 31821 / ZM4 / CP4), this protein is Large ribosomal subunit protein bL9.